Here is a 458-residue protein sequence, read N- to C-terminus: Histone acetyltransferase Tip60 homolog (458 aa).

Residues 1–24 form a disordered region; sequence MTEPKKEIIEDENHGISKKIPTDP. The 57-residue stretch at 30–86 folds into the Tudor-knot domain; sequence VTEGCRLLVMMASQEEERWAEVISRCRAANGSIKFYVHYIDCNRRLDEWVQSDRLNL. The disordered stretch occupies residues 94–123; sequence KGGKKGAHLREENRDSNENEGKKSGRKRKI. The segment covering 101–116 has biased composition (basic and acidic residues); sequence HLREENRDSNENEGKK. The region spanning 168-446 is the MYST-type HAT domain; it reads TRIRNVECIE…INPAALQWRP (279 aa). A C2HC MYST-type zinc finger spans residues 201-226; the sequence is IYICEFCLKYLKSKTCLKRHMEKCAM. Lysine 268 is subject to N6-acetyllysine; by autocatalysis. Acetyl-CoA-binding positions include 311–313 and 318–324; these read ILV and QKKGYGS. The Proton donor/acceptor role is filled by glutamate 344. 2 residues coordinate acetyl-CoA: serine 348 and serine 357.

Belongs to the MYST (SAS/MOZ) family. In terms of assembly, interacts with transcription-associated protein trr-1. Probably a component of a complex with histone acetyltransferase (HAT) activity, at least composed of mys-1 and trr-1. Post-translationally, autoacetylation at Lys-268 is required for binding histones with high affinity and for proper function.

Its subcellular location is the nucleus. The catalysed reaction is L-lysyl-[protein] + acetyl-CoA = N(6)-acetyl-L-lysyl-[protein] + CoA + H(+). Functionally, probable catalytic subunit of the Tip60 chromatin-remodeling complex. Plays a role in acetylation of nucleosomal histone H4 and perhaps also H2A, probably acting as a component of the Tip60 histone acetyltransferase complex. Acts in the determination of vulval and distal tip cell (DTC) precursor cell fates. Involved in the positive regulation of transcription factor daf-16, probably acting by histone acetylation; thereby modulating stress resistance. The protein is Histone acetyltransferase Tip60 homolog of Caenorhabditis elegans.